The sequence spans 106 residues: Urease subunit beta (106 aa).

This sequence belongs to the urease beta subunit family. As to quaternary structure, heterotrimer of UreA (gamma), UreB (beta) and UreC (alpha) subunits. Three heterotrimers associate to form the active enzyme.

It localises to the cytoplasm. It carries out the reaction urea + 2 H2O + H(+) = hydrogencarbonate + 2 NH4(+). It participates in nitrogen metabolism; urea degradation; CO(2) and NH(3) from urea (urease route): step 1/1. In Synechococcus sp. (strain WH7805), this protein is Urease subunit beta.